The primary structure comprises 112 residues: uncharacterized protein (112 aa).

Residues 89 to 106 (TLYVLVIVGLTILCFLLV) form a helical membrane-spanning segment.

The protein belongs to the IIV-6 466R family.

Its subcellular location is the membrane. This is an uncharacterized protein from Aedes vexans (Inland floodwater mosquito).